A 516-amino-acid polypeptide reads, in one-letter code: L-amino-acid oxidase (516 aa).

Residues methionine 1 to cysteine 18 form the signal peptide. A disulfide bond links cysteine 28 and cysteine 191. FAD-binding positions include methionine 61 to serine 62, glutamate 81 to alanine 82, arginine 89, and glycine 105 to arginine 108. A substrate-binding site is contributed by arginine 108. An N-linked (GlcNAc...) asparagine glycan is attached at asparagine 190. Residue histidine 241 participates in substrate binding. Valine 279 contacts FAD. Residues cysteine 349 and cysteine 430 are joined by a disulfide bond. Residue asparagine 379 is glycosylated (N-linked (GlcNAc...) asparagine). Position 390 (tyrosine 390) interacts with substrate. FAD is bound by residues glutamate 475, histidine 481–serine 486, and glycine 482–serine 487. Substrate contacts are provided by residues histidine 481–glycine 482 and glycine 482–tryptophan 483.

This sequence belongs to the flavin monoamine oxidase family. FIG1 subfamily. As to quaternary structure, homodimer; non-covalently linked. FAD is required as a cofactor. N-glycosylated. Expressed by the venom gland.

The protein localises to the secreted. The catalysed reaction is an L-alpha-amino acid + O2 + H2O = a 2-oxocarboxylate + H2O2 + NH4(+). Its function is as follows. Catalyzes an oxidative deamination of predominantly hydrophobic and aromatic L-amino acids, thus producing hydrogen peroxide that may contribute to the diverse toxic effects of this enzyme. Exhibits diverse biological activities, such as hemorrhage, hemolysis, edema, apoptosis of vascular endothelial cells or tumor cell lines, antibacterial and antiparasitic activities, as well as regulation of platelet aggregation. Effects of snake L-amino oxidases on platelets are controversial, since they either induce aggregation or inhibit agonist-induced aggregation. These different effects are probably due to different experimental conditions. Displays dose-dependent inhibition on HIV-1 infection and replication. This Trimeresurus stejnegeri (Chinese green tree viper) protein is L-amino-acid oxidase.